The following is a 212-amino-acid chain: Uridine kinase (212 aa).

Residue 13-20 (GASASGKS) participates in ATP binding.

This sequence belongs to the uridine kinase family.

The protein resides in the cytoplasm. The enzyme catalyses uridine + ATP = UMP + ADP + H(+). It carries out the reaction cytidine + ATP = CMP + ADP + H(+). The protein operates within pyrimidine metabolism; CTP biosynthesis via salvage pathway; CTP from cytidine: step 1/3. It participates in pyrimidine metabolism; UMP biosynthesis via salvage pathway; UMP from uridine: step 1/1. The sequence is that of Uridine kinase from Shewanella frigidimarina (strain NCIMB 400).